The chain runs to 847 residues: Leucine--tRNA ligase (847 aa).

Residues 41–51 (PYPSGRIHMGH) carry the 'HIGH' region motif. The 'KMSKS' region signature appears at 619-623 (KMSKS). ATP is bound at residue lysine 622.

It belongs to the class-I aminoacyl-tRNA synthetase family.

The protein resides in the cytoplasm. The catalysed reaction is tRNA(Leu) + L-leucine + ATP = L-leucyl-tRNA(Leu) + AMP + diphosphate. The protein is Leucine--tRNA ligase of Cereibacter sphaeroides (strain KD131 / KCTC 12085) (Rhodobacter sphaeroides).